The following is a 119-amino-acid chain: Large ribosomal subunit protein uL18 (119 aa).

This sequence belongs to the universal ribosomal protein uL18 family. As to quaternary structure, part of the 50S ribosomal subunit; part of the 5S rRNA/L5/L18/L25 subcomplex. Contacts the 5S and 23S rRNAs.

Its function is as follows. This is one of the proteins that bind and probably mediate the attachment of the 5S RNA into the large ribosomal subunit, where it forms part of the central protuberance. In Clostridium perfringens (strain 13 / Type A), this protein is Large ribosomal subunit protein uL18.